A 205-amino-acid polypeptide reads, in one-letter code: Holliday junction branch migration complex subunit RuvA (205 aa).

Residues 1–65 (MIGRLRGAVA…SAGLRLYGFL (65 aa)) are domain I. A domain II region spans residues 66-144 (TREDRRAFVL…TDGPVLMSAP (79 aa)). The flexible linker stretch occupies residues 145–153 (TSSAPSAPA). Residues 153–205 (AKPAPTGDAVAALMGLGVAEVNARRVVEAAAAELGEEATVQALIKAGLKELGR) are domain III.

Belongs to the RuvA family. Homotetramer. Forms an RuvA(8)-RuvB(12)-Holliday junction (HJ) complex. HJ DNA is sandwiched between 2 RuvA tetramers; dsDNA enters through RuvA and exits via RuvB. An RuvB hexamer assembles on each DNA strand where it exits the tetramer. Each RuvB hexamer is contacted by two RuvA subunits (via domain III) on 2 adjacent RuvB subunits; this complex drives branch migration. In the full resolvosome a probable DNA-RuvA(4)-RuvB(12)-RuvC(2) complex forms which resolves the HJ.

The protein localises to the cytoplasm. In terms of biological role, the RuvA-RuvB-RuvC complex processes Holliday junction (HJ) DNA during genetic recombination and DNA repair, while the RuvA-RuvB complex plays an important role in the rescue of blocked DNA replication forks via replication fork reversal (RFR). RuvA specifically binds to HJ cruciform DNA, conferring on it an open structure. The RuvB hexamer acts as an ATP-dependent pump, pulling dsDNA into and through the RuvAB complex. HJ branch migration allows RuvC to scan DNA until it finds its consensus sequence, where it cleaves and resolves the cruciform DNA. This chain is Holliday junction branch migration complex subunit RuvA, found in Caulobacter vibrioides (strain ATCC 19089 / CIP 103742 / CB 15) (Caulobacter crescentus).